The primary structure comprises 71 residues: SPbeta prophage-derived uncharacterized protein YorP (71 aa).

The chain is SPbeta prophage-derived uncharacterized protein YorP (yorP) from Bacillus subtilis (strain 168).